The chain runs to 432 residues: Bifunctional IPC transferase and DIPP synthase (432 aa).

Positions 3-225 are mobA-like NTP transferase; it reads PERAVILAAG…RARRMLVRTA (223 aa). CTP-binding positions include 9–11, Lys-22, and Glu-113; that span reads LAA. Residue Glu-113 coordinates Mg(2+). Positions 226–426 are CDP-alcohol phosphatidyltransferases; the sequence is VKGTGDGFVS…LTLYFVVKKV (201 aa). 3 consecutive transmembrane segments (helical) span residues 264 to 284, 337 to 356, and 385 to 405; these read FLLG…AGIL, IWYF…SYST, and VFLT…ALFL.

The protein in the N-terminal section; belongs to the MobA family. It in the C-terminal section; belongs to the CDP-alcohol phosphatidyltransferase class-I family. It depends on Mg(2+) as a cofactor.

The protein resides in the membrane. The enzyme catalyses 1D-myo-inositol 3-phosphate + CTP + H(+) = CDP-1L-myo-inositol + diphosphate. The catalysed reaction is CDP-1L-myo-inositol + 1D-myo-inositol 3-phosphate = bis(1L-myo-inositol) 3,1'-phosphate 1-phosphate + CMP + H(+). Involved in biosynthesis of di-myo-inositol phosphate (DIP), a widespread organic solute in microorganisms adapted to hot environments. Catalyzes the condensation of CTP and L-myo-inositol-1-phosphate into CDP-L-myo-inositol, as well as the biosynthesis of di-myo-inositol-1,3'-phosphate-1'-phosphate (DIPP) from CDP-L-myo-inositol and L-myo-inositol-1-phosphate. This is Bifunctional IPC transferase and DIPP synthase from Thermococcus kodakarensis (strain ATCC BAA-918 / JCM 12380 / KOD1) (Pyrococcus kodakaraensis (strain KOD1)).